The sequence spans 250 residues: UPF0736 protein RBAM_011410 (250 aa).

Belongs to the UPF0736 family.

This Bacillus velezensis (strain DSM 23117 / BGSC 10A6 / LMG 26770 / FZB42) (Bacillus amyloliquefaciens subsp. plantarum) protein is UPF0736 protein RBAM_011410.